We begin with the raw amino-acid sequence, 256 residues long: MIDVQSQKDQRGISIQKVGIKDLNWPIVVMDRENKTQTTIAKIIAAAELKGDIRGTHMSRFIEAIDELKVVGPKEIEKLLDRIKEKLNSEKAYIRFDFPYFINKRTPVTATLSPLKVDCYFEAEKDQKFDLKVGVIVPVHTLCPCSKEISEYGAHNQRAYVTIEVRMKKFMWIEELVEIAEASASCPLYSILKRPDEKWVTERAYQNPRFVEDLLREVVLKMKEDGRIKWYKVFVESIESIHNHNAFAYIEGEITK.

Belongs to the GTP cyclohydrolase IV family.

It catalyses the reaction GTP + H2O = 7,8-dihydroneopterin 3'-triphosphate + formate + H(+). It functions in the pathway cofactor biosynthesis; 7,8-dihydroneopterin triphosphate biosynthesis; 7,8-dihydroneopterin triphosphate from GTP: step 1/1. Converts GTP to 7,8-dihydroneopterin triphosphate. This is GTP cyclohydrolase FolE2 from Caldicellulosiruptor bescii (strain ATCC BAA-1888 / DSM 6725 / KCTC 15123 / Z-1320) (Anaerocellum thermophilum).